A 190-amino-acid chain; its full sequence is Imidazoleglycerol-phosphate dehydratase (190 aa).

The protein belongs to the imidazoleglycerol-phosphate dehydratase family.

The protein localises to the cytoplasm. It catalyses the reaction D-erythro-1-(imidazol-4-yl)glycerol 3-phosphate = 3-(imidazol-4-yl)-2-oxopropyl phosphate + H2O. Its pathway is amino-acid biosynthesis; L-histidine biosynthesis; L-histidine from 5-phospho-alpha-D-ribose 1-diphosphate: step 6/9. The sequence is that of Imidazoleglycerol-phosphate dehydratase from Methanococcus maripaludis (strain DSM 14266 / JCM 13030 / NBRC 101832 / S2 / LL).